A 102-amino-acid chain; its full sequence is NADH-quinone oxidoreductase subunit K (102 aa).

3 helical membrane-spanning segments follow: residues 6 to 26 (MHHG…GILV), 30 to 50 (LIFI…AFVV), and 64 to 84 (FIFI…LLLL).

It belongs to the complex I subunit 4L family. In terms of assembly, NDH-1 is composed of 14 different subunits. Subunits NuoA, H, J, K, L, M, N constitute the membrane sector of the complex.

The protein localises to the cell inner membrane. It carries out the reaction a quinone + NADH + 5 H(+)(in) = a quinol + NAD(+) + 4 H(+)(out). In terms of biological role, NDH-1 shuttles electrons from NADH, via FMN and iron-sulfur (Fe-S) centers, to quinones in the respiratory chain. The immediate electron acceptor for the enzyme in this species is believed to be ubiquinone. Couples the redox reaction to proton translocation (for every two electrons transferred, four hydrogen ions are translocated across the cytoplasmic membrane), and thus conserves the redox energy in a proton gradient. This Nitrosospira multiformis (strain ATCC 25196 / NCIMB 11849 / C 71) protein is NADH-quinone oxidoreductase subunit K.